The following is a 146-amino-acid chain: Hemoglobin subunit beta/beta' (146 aa).

The 145-residue stretch at 2–146 folds into the Globin domain; sequence HWSAEEKQLI…VAHALARKYH (145 aa). Residues histidine 63 and histidine 92 each coordinate heme b.

It belongs to the globin family. As to quaternary structure, heterotetramer of two alpha chains and two beta chains. In terms of tissue distribution, red blood cells.

Its function is as follows. Involved in oxygen transport from the lung to the various peripheral tissues. The sequence is that of Hemoglobin subunit beta/beta' (HBB) from Chroicocephalus ridibundus (Black-headed gull).